Consider the following 825-residue polypeptide: Transcription regulator galc (825 aa).

Positions 60–102 are disordered; the sequence is RPGPYPYQSSSSSSRELSGSAAKVAIPRTTSASSQSQRRRSAR. Over residues 68–79 the composition is skewed to low complexity; it reads SSSSSSRELSGS. The segment at residues 104–131 is a DNA-binding region (zn(2)-C6 fungal-type); it reads CEPCRQRKIKCDGSKPVCRQCIDHNVSC. The span at 239–251 shows a compositional bias: basic and acidic residues; the sequence is DEAKSRNRKKEDS. 3 disordered regions span residues 239-267, 642-663, and 804-825; these read DEAKSRNRKKEDSTDMEDGVAGGHTMTPP, APGDPSPDPAVPPSARQGSRRI, and HLRDIDNTPSSRAGSMEFERHH.

It is found in the nucleus. Functionally, transcription factor that negatively regulates the biosynthesis of ochratoxin A (OTA), a mycotoxin composed of a chlorinated type I polyketide dihydroisocoumarin moiety linked to L-phenylalanine, and demonstrated to have nephrotoxic, immunotoxic, genotoxic, neurotoxic, and teratogenic properties. Also regulates cellular redox homeostasis and sensitivity to H(2)O(2). Carbon sources such as sucrose, glucose and arabinose repress gal4, leading to up-regulation of OTA biosynthetic genes and altered cellular redox homeostasis. This chain is Transcription regulator galc, found in Aspergillus niger (strain ATCC MYA-4892 / CBS 513.88 / FGSC A1513).